The following is a 194-amino-acid chain: Ferredoxin, apicoplast (194 aa).

The transit peptide at 1-19 (MNIVILLLILTFSIKHSNT) directs the protein to the apicoplast. Positions 99 to 189 (YNITLRTNDG…DCVIETHKED (91 aa)) constitute a 2Fe-2S ferredoxin-type domain. The [2Fe-2S] cluster site is built by C135, C140, C143, and C173.

This sequence belongs to the 2Fe2S plant-type ferredoxin family. [2Fe-2S] cluster serves as cofactor.

Its subcellular location is the plastid. It localises to the apicoplast. In terms of biological role, ferredoxins are iron-sulfur proteins that transfer electrons in a wide variety of metabolic reactions. By transferring electrons to 4-hydroxy-3-methylbut-2-enyl diphosphate reductase LytB/IspH, plays a role in the terminal step of the DOXP/MEP pathway for isoprenoid precursor biosynthesis. In Plasmodium falciparum (isolate 3D7), this protein is Ferredoxin, apicoplast.